The primary structure comprises 65 residues: Large ribosomal subunit protein bL35 (65 aa).

Basic residues predominate over residues 1 to 26; it reads MPKIKTHRGAAKRFSKTGTGKIKRSH. The segment at 1-41 is disordered; it reads MPKIKTHRGAAKRFSKTGTGKIKRSHAFTSHILTSKTRKNK.

This sequence belongs to the bacterial ribosomal protein bL35 family.

This is Large ribosomal subunit protein bL35 from Geotalea daltonii (strain DSM 22248 / JCM 15807 / FRC-32) (Geobacter daltonii).